We begin with the raw amino-acid sequence, 457 residues long: Trigger factor (457 aa).

The PPIase FKBP-type domain occupies 162 to 243 (GDFVSIDLSA…VQTVKERELP (82 aa)). Residues 434–457 (AELFGSSEDETEADASDSAESEDK) are disordered. Acidic residues predominate over residues 440–457 (SEDETEADASDSAESEDK).

It belongs to the FKBP-type PPIase family. Tig subfamily.

It is found in the cytoplasm. The catalysed reaction is [protein]-peptidylproline (omega=180) = [protein]-peptidylproline (omega=0). In terms of biological role, involved in protein export. Acts as a chaperone by maintaining the newly synthesized protein in an open conformation. Functions as a peptidyl-prolyl cis-trans isomerase. The sequence is that of Trigger factor from Rhodococcus erythropolis (strain PR4 / NBRC 100887).